The sequence spans 161 residues: Nucleotide-binding protein SAR11_0692 (161 aa).

The protein belongs to the YajQ family.

Nucleotide-binding protein. The protein is Nucleotide-binding protein SAR11_0692 of Pelagibacter ubique (strain HTCC1062).